A 367-amino-acid chain; its full sequence is Choline-phosphate cytidylyltransferase A (367 aa).

Met1 bears the N-acetylmethionine mark. The interval 1 to 31 (MDAQSSAKVNSRKRRKEVPGPNGATEEDGIP) is disordered. Lys8 is subject to N6-acetyllysine. CTP-binding residues include Ile84, Phe85, His92, and Lys122. Lys122 and Trp151 together coordinate phosphocholine. CTP-binding residues include His168, Asp169, Tyr173, Gln195, Arg196, Thr197, and Ile200. Amphipathic regions lie at residues 228–287 (KELN…EFIG) and 298–315 (ALKH…QAIS). Ser233 is subject to Phosphoserine. The interval 272–293 (IDLIQKWEEKSREFIGSFLEMF) is autoinhibitory (AI). Residues 313–367 (AISPKQSPSSSPTHERSPSPSFRWPFSGKTSPSSSPASLSRCKAVTCDISEDEED) form a disordered region. At Ser315 the chain carries Phosphoserine; by PKC. Residues 315 to 324 (SPKQSPSSSP) show a composition bias toward polar residues. 4 positions are modified to phosphoserine: Ser319, Ser321, Ser322, and Ser323. Residues 319–324 (SPSSSP) form repeat 1. A 3 X repeats region spans residues 319-348 (SPSSSPTHERSPSPSFRWPFSGKTSPSSSP). The residue at position 325 (Thr325) is a Phosphothreonine. Residues Ser329 and Ser331 each carry the phosphoserine modification. The 2; approximate repeat unit spans residues 329–333 (SPSPS). The span at 330–352 (PSPSFRWPFSGKTSPSSSPASLS) shows a compositional bias: low complexity. Residue Ser333 is modified to Phosphoserine; by PKC. Thr342 is subject to Phosphothreonine. Phosphoserine occurs at positions 343, 345, 346, 347, 350, and 352. The stretch at 343 to 348 (SPSSSP) is repeat 3. A Phosphothreonine modification is found at Thr358. Ser362 carries the phosphoserine; by CK2 modification.

Belongs to the cytidylyltransferase family. In terms of assembly, homodimer. In terms of processing, the serine residues of the C-terminus are phosphorylated. The inactive soluble form is stabilized by phosphorylation, the active membrane bound form is promoted by anionic lipids or diacylglycerol, and is stabilized by dephosphorylation. Post-translationally, the N-terminus is blocked. Monoubiquitinated by the SCF(FBXL2) complex, leading to proteasomal degradation.

It is found in the cytoplasm. Its subcellular location is the cytosol. The protein localises to the membrane. The protein resides in the endoplasmic reticulum membrane. It localises to the nucleus. The catalysed reaction is phosphocholine + CTP + H(+) = CDP-choline + diphosphate. Its pathway is phospholipid metabolism; phosphatidylcholine biosynthesis; phosphatidylcholine from phosphocholine: step 1/2. Interconverts between an inactive cytosolic form and an active membrane-bound form. Activation involves disruption of an inhibitory interaction between helices at the base of the active site and the autoinhibitory (AI) region. Activated by N-methylethanolamine. Activated by oleic acid-containing phosphatidylcholine vesicles. Functionally, catalyzes the key rate-limiting step in the CDP-choline pathway for phosphatidylcholine biosynthesis. The protein is Choline-phosphate cytidylyltransferase A (Pcyt1a) of Rattus norvegicus (Rat).